Reading from the N-terminus, the 515-residue chain is Probable cytosol aminopeptidase (515 aa).

Residues K279 and D284 each coordinate Mn(2+). K291 is an active-site residue. Mn(2+)-binding residues include D302, D361, and E363. The active site involves R365.

It belongs to the peptidase M17 family. The cofactor is Mn(2+).

The protein localises to the cytoplasm. The enzyme catalyses Release of an N-terminal amino acid, Xaa-|-Yaa-, in which Xaa is preferably Leu, but may be other amino acids including Pro although not Arg or Lys, and Yaa may be Pro. Amino acid amides and methyl esters are also readily hydrolyzed, but rates on arylamides are exceedingly low.. It catalyses the reaction Release of an N-terminal amino acid, preferentially leucine, but not glutamic or aspartic acids.. Its function is as follows. Presumably involved in the processing and regular turnover of intracellular proteins. Catalyzes the removal of unsubstituted N-terminal amino acids from various peptides. The chain is Probable cytosol aminopeptidase from Mycobacterium bovis (strain ATCC BAA-935 / AF2122/97).